Reading from the N-terminus, the 478-residue chain is Putative multidrug resistance outer membrane protein MdtQ (478 aa).

A signal peptide spans 1–21; that stretch reads MNRDSFYPAIACFPLLLMLAG. Residue cysteine 22 is the site of N-palmitoyl cysteine attachment. Cysteine 22 is lipidated: S-diacylglycerol cysteine.

Belongs to the outer membrane factor (OMF) (TC 1.B.17) family.

It is found in the cell outer membrane. Its function is as follows. Could be involved in resistance to puromycin, acriflavine and tetraphenylarsonium chloride. This chain is Putative multidrug resistance outer membrane protein MdtQ (mdtQ), found in Shigella flexneri.